Reading from the N-terminus, the 133-residue chain is Ribosome-binding factor A (133 aa).

Belongs to the RbfA family. In terms of assembly, monomer. Binds 30S ribosomal subunits, but not 50S ribosomal subunits or 70S ribosomes.

The protein resides in the cytoplasm. One of several proteins that assist in the late maturation steps of the functional core of the 30S ribosomal subunit. Associates with free 30S ribosomal subunits (but not with 30S subunits that are part of 70S ribosomes or polysomes). Required for efficient processing of 16S rRNA. May interact with the 5'-terminal helix region of 16S rRNA. This is Ribosome-binding factor A from Acinetobacter baumannii (strain AB307-0294).